We begin with the raw amino-acid sequence, 49 residues long: Large ribosomal subunit protein bL33A (49 aa).

Belongs to the bacterial ribosomal protein bL33 family.

The sequence is that of Large ribosomal subunit protein bL33A from Lactobacillus delbrueckii subsp. bulgaricus (strain ATCC 11842 / DSM 20081 / BCRC 10696 / JCM 1002 / NBRC 13953 / NCIMB 11778 / NCTC 12712 / WDCM 00102 / Lb 14).